Reading from the N-terminus, the 281-residue chain is Probable endonuclease 4 (281 aa).

Zn(2+)-binding residues include His-69, His-109, Glu-145, Asp-179, His-182, His-216, Asp-229, His-231, and Glu-261.

It belongs to the AP endonuclease 2 family. The cofactor is Zn(2+).

It catalyses the reaction Endonucleolytic cleavage to 5'-phosphooligonucleotide end-products.. Its function is as follows. Endonuclease IV plays a role in DNA repair. It cleaves phosphodiester bonds at apurinic or apyrimidinic (AP) sites, generating a 3'-hydroxyl group and a 5'-terminal sugar phosphate. This Yersinia enterocolitica serotype O:8 / biotype 1B (strain NCTC 13174 / 8081) protein is Probable endonuclease 4.